The sequence spans 104 residues: Complex III assembly factor LYRM7 (104 aa).

This sequence belongs to the complex I LYR family. As to quaternary structure, interacts with UQCRFS1.

The protein localises to the mitochondrion matrix. Functionally, assembly factor required for Rieske Fe-S protein UQCRFS1 incorporation into the cytochrome b-c1 (CIII) complex. Functions as a chaperone, binding to this subunit within the mitochondrial matrix and stabilizing it prior to its translocation and insertion into the late CIII dimeric intermediate within the mitochondrial inner membrane. This Danio rerio (Zebrafish) protein is Complex III assembly factor LYRM7 (LYRM7).